The chain runs to 208 residues: Outer-membrane lipoprotein carrier protein (208 aa).

A signal peptide spans Met-1–Ala-22.

Belongs to the LolA family. In terms of assembly, monomer.

It localises to the periplasm. Participates in the translocation of lipoproteins from the inner membrane to the outer membrane. Only forms a complex with a lipoprotein if the residue after the N-terminal Cys is not an aspartate (The Asp acts as a targeting signal to indicate that the lipoprotein should stay in the inner membrane). The polypeptide is Outer-membrane lipoprotein carrier protein (Shewanella putrefaciens (strain CN-32 / ATCC BAA-453)).